Consider the following 142-residue polypeptide: Cytidine deaminase (142 aa).

The region spanning 9–139 is the CMP/dCMP-type deaminase domain; that stretch reads RQLEALKRAA…ELLPMAFGPS (131 aa). 50–52 contributes to the substrate binding site; it reads NVE. Cys61 is a binding site for Zn(2+). Catalysis depends on Glu63, which acts as the Proton donor. 2 residues coordinate Zn(2+): Cys96 and Cys99.

This sequence belongs to the cytidine and deoxycytidylate deaminase family. In terms of assembly, homodimer. It depends on Zn(2+) as a cofactor.

The enzyme catalyses cytidine + H2O + H(+) = uridine + NH4(+). The catalysed reaction is 2'-deoxycytidine + H2O + H(+) = 2'-deoxyuridine + NH4(+). In terms of biological role, this enzyme scavenges exogenous and endogenous cytidine and 2'-deoxycytidine for UMP synthesis. The sequence is that of Cytidine deaminase (CDD1) from Saccharomyces cerevisiae (strain ATCC 204508 / S288c) (Baker's yeast).